A 317-amino-acid polypeptide reads, in one-letter code: ATP synthase gamma chain (317 aa).

The protein belongs to the ATPase gamma chain family. F-type ATPases have 2 components, CF(1) - the catalytic core - and CF(0) - the membrane proton channel. CF(1) has five subunits: alpha(3), beta(3), gamma(1), delta(1), epsilon(1). CF(0) has three main subunits: a, b and c.

The protein localises to the cellular thylakoid membrane. Produces ATP from ADP in the presence of a proton gradient across the membrane. The gamma chain is believed to be important in regulating ATPase activity and the flow of protons through the CF(0) complex. This chain is ATP synthase gamma chain, found in Synechococcus sp. (strain CC9902).